We begin with the raw amino-acid sequence, 599 residues long: ATP-dependent zinc metalloprotease FtsH 3 (599 aa).

Over 1–7 the chain is Cytoplasmic; the sequence is MKYKKKN. The helical transmembrane segment at 8 to 28 threads the bilayer; the sequence is ILFITTIIVIYLAFLFNWLEI. The Extracellular segment spans residues 29–128; the sequence is GIFKPKGESI…PFSWLLSIFS (100 aa). A helical transmembrane segment spans residues 129-149; that stretch reads ILLNFINVLSSLVFTIYIFLA. The Cytoplasmic portion of the chain corresponds to 150–599; that stretch reads IHRESGKLNS…IEQLVVNTKK (450 aa). Position 214–221 (214–221) interacts with ATP; the sequence is GPPGTGKT. His436 serves as a coordination point for Zn(2+). The active site involves Glu437. Residues His440 and Asp512 each coordinate Zn(2+).

This sequence in the central section; belongs to the AAA ATPase family. The protein in the C-terminal section; belongs to the peptidase M41 family. Homohexamer. Requires Zn(2+) as cofactor.

Its subcellular location is the cell membrane. Its function is as follows. Acts as a processive, ATP-dependent zinc metallopeptidase for both cytoplasmic and membrane proteins. Plays a role in the quality control of integral membrane proteins. The protein is ATP-dependent zinc metalloprotease FtsH 3 of Phytoplasma mali (strain AT).